Here is a 526-residue protein sequence, read N- to C-terminus: Reelin domain-containing protein 1 (526 aa).

The signal sequence occupies residues 1–23 (MRMQAALVGWACTTLCLASCSSA). Positions 24 to 179 (FSHGASTVAC…SAHSDDRMEP (156 aa)) constitute a Reelin domain. Residues 24-443 (FSHGASTVAC…PLGIQLRTPQ (420 aa)) are Extracellular-facing. Disordered stretches follow at residues 242–272 (DAETLSQPSSHTATEGSINQQPSGDSNPTLE), 294–336 (FASS…TVTQ), and 370–398 (LQTSGTSGLPAAGDQSEASRASASFLPQS). Residues 245–271 (TLSQPSSHTATEGSINQQPSGDSNPTL) show a composition bias toward polar residues. The segment covering 385-396 (SEASRASASFLP) has biased composition (polar residues). Residues 444-462 (LGILLCLSATLGMALAAGL) traverse the membrane as a helical segment. Residues 463 to 526 (RYLHTQYCHQ…PSVGSKKTVL (64 aa)) are Cytoplasmic-facing.

The protein localises to the membrane. The sequence is that of Reelin domain-containing protein 1 from Homo sapiens (Human).